A 130-amino-acid chain; its full sequence is MMKSIQLCILLWCLRAVCCHSCELTNITISVEKEECRFCISINTTWCEGYCYTRDLVYKDPARPNTQKVCTFKELVYETIRLPGCARHSDSLYTYPVATECHCGKCDSDSTDCTVRGLGPSYCSFGEMKE.

A signal peptide spans 1–20 (MMKSIQLCILLWCLRAVCCH). 6 disulfide bridges follow: Cys-22-Cys-70, Cys-36-Cys-85, Cys-39-Cys-123, Cys-47-Cys-101, Cys-51-Cys-103, and Cys-106-Cys-113. 2 N-linked (GlcNAc...) asparagine glycosylation sites follow: Asn-26 and Asn-43.

It belongs to the glycoprotein hormones subunit beta family. As to quaternary structure, heterodimer. The active follitropin is a heterodimer composed of an alpha chain/CGA shared with other hormones and a unique beta chain/FSHB shown here.

It localises to the secreted. Its function is as follows. Together with the alpha chain CGA constitutes follitropin, the follicle-stimulating hormone, and provides its biological specificity to the hormone heterodimer. Binds FSHR, a G protein-coupled receptor, on target cells to activate downstream signaling pathways. Follitropin is involved in follicle development and spermatogenesis in reproductive organs. The protein is Follitropin subunit beta (Fshb) of Rattus norvegicus (Rat).